The chain runs to 166 residues: Probable chemoreceptor glutamine deamidase CheD (166 aa).

The protein belongs to the CheD family.

The catalysed reaction is L-glutaminyl-[protein] + H2O = L-glutamyl-[protein] + NH4(+). Functionally, probably deamidates glutamine residues to glutamate on methyl-accepting chemotaxis receptors (MCPs), playing an important role in chemotaxis. The polypeptide is Probable chemoreceptor glutamine deamidase CheD (Oceanobacillus iheyensis (strain DSM 14371 / CIP 107618 / JCM 11309 / KCTC 3954 / HTE831)).